Here is a 540-residue protein sequence, read N- to C-terminus: Patellin-4 (540 aa).

Serine 53 carries the post-translational modification Phosphoserine. A coiled-coil region spans residues 61 to 183 (FADLKESEKK…EKKTEDVVTE (123 aa)). The interval 89 to 140 (LKTKKKESSPMKEKKEEVVKPEAEVEKKKEEAAEEKVEEEKKSEAVVTEEAP) is disordered. Basic and acidic residues predominate over residues 94–140 (KESSPMKEKKEEVVKPEAEVEKKKEEAAEEKVEEEKKSEAVVTEEAP). A Glycyl lysine isopeptide (Lys-Gly) (interchain with G-Cter in ubiquitin) cross-link involves residue lysine 249. The 171-residue stretch at 258-428 (GEEFGEDLAT…QYGGFKTVDD (171 aa)) folds into the CRAL-TRIO domain. Residues 433–534 (NETVSEVVVK…KKKVLYRYRT (102 aa)) enclose the GOLD domain.

The protein belongs to the patellin family.

It is found in the membrane. The protein localises to the cytoplasm. Carrier protein that may be involved in membrane-trafficking events associated with cell plate formation during cytokinesis. Binds to some hydrophobic molecules such as phosphoinositides and promotes their transfer between the different cellular sites. The chain is Patellin-4 (PATL4) from Arabidopsis thaliana (Mouse-ear cress).